A 536-amino-acid polypeptide reads, in one-letter code: MFS-type efflux pump MFS1 (536 aa).

The next 3 helical transmembrane spans lie at 30–50 (VTGL…LLVA), 80–100 (YLLT…FFPV), and 102–122 (WVFL…GAAP). N-linked (GlcNAc...) asparagine glycosylation is present at asparagine 123. Transmembrane regions (helical) follow at residues 133-153 (VAGI…AYSI), 163-183 (GAIG…GGAF), and 191-211 (WCFY…LIFL). Asparagine 221 carries an N-linked (GlcNAc...) asparagine glycan. 8 helical membrane passes run 234–254 (IGTA…QWGG), 264–284 (IIAL…FQIR), 306–326 (FFLF…PIWF), 342–362 (IPMV…VTAI), 366–386 (APLY…LTTF), 400–420 (IIFG…AQAV), 426–446 (VAVG…LFVS), and 503–523 (TWYV…GMEW).

The protein belongs to the major facilitator superfamily. TCR/Tet family.

Its subcellular location is the cell membrane. Functionally, MFS-type efflux pump involved in the modulation susceptibility to azoles, including fluconazole, itraconazole, miconazole and voriconazole. Also confers increased resistance chloramphenicol and thiamphenicol, suggesting that it acts as a pleiotropic drug transporter with a broad substrate spectrum. Finally, increases the tolerance to cycloheximide when expressed in S.cerevisiae, but not in dermatophyte species. This is MFS-type efflux pump MFS1 from Arthroderma benhamiae (strain ATCC MYA-4681 / CBS 112371) (Trichophyton mentagrophytes).